A 424-amino-acid chain; its full sequence is S-inosyl-L-homocysteine hydrolase (424 aa).

Substrate is bound by residues Asp-130 and Glu-155. Residue 156–158 (TTT) participates in NAD(+) binding. Substrate is bound by residues Lys-185 and Asp-189. NAD(+) is bound by residues Asn-190, 219–224 (GYGWCG), Glu-242, Asn-277, 298–300 (AGH), and Asn-346.

It belongs to the adenosylhomocysteinase family. Requires NAD(+) as cofactor.

The protein resides in the cytoplasm. It carries out the reaction S-inosyl-L-homocysteine + H2O = L-homocysteine + inosine. It functions in the pathway amino-acid biosynthesis; S-adenosyl-L-methionine biosynthesis. In terms of biological role, catalyzes the hydrolysis of S-inosyl-L-homocysteine (SIH) to L-homocysteine (Hcy) and inosine. Likely functions in a S-adenosyl-L-methionine (SAM) recycling pathway from S-adenosyl-L-homocysteine (SAH) produced from SAM-dependent methylation reactions. Can also catalyze the reverse reaction in vitro, i.e. the synthesis of SIH from Hcy and inosine. This is S-inosyl-L-homocysteine hydrolase from Methanopyrus kandleri (strain AV19 / DSM 6324 / JCM 9639 / NBRC 100938).